Reading from the N-terminus, the 348-residue chain is Erlin-1 (348 aa).

Residues 1–7 (MNMTQAR) lie on the Cytoplasmic side of the membrane. A helical transmembrane segment spans residues 8-28 (LLVAAVVGLVAILLYASIHKI). Residues 29–348 (EEGHLAVYYR…SPIQNKENAG (320 aa)) are Lumenal-facing. N-linked (GlcNAc...) asparagine glycosylation is present at N108. An N6-acetyllysine modification is found at K269. The span at 318 to 336 (DGRTGREDSLPPEEAREPS) shows a compositional bias: basic and acidic residues. Positions 318–348 (DGRTGREDSLPPEEAREPSGESPIQNKENAG) are disordered. A compositionally biased stretch (polar residues) spans 339–348 (SPIQNKENAG).

This sequence belongs to the band 7/mec-2 family. As to quaternary structure, forms a heteromeric complex with ERLIN2. In complex with ERLIN2, interacts with RNF170. Interacts with AMFR and SYVN1. Deubiquitinated by USP25; leading to stabilization.

Its subcellular location is the endoplasmic reticulum membrane. Its function is as follows. Component of the ERLIN1/ERLIN2 complex which mediates the endoplasmic reticulum-associated degradation (ERAD) of inositol 1,4,5-trisphosphate receptors (IP3Rs). Involved in regulation of cellular cholesterol homeostasis by regulation the SREBP signaling pathway. Binds cholesterol and may promote ER retention of the SCAP-SREBF complex. In Mus musculus (Mouse), this protein is Erlin-1.